Consider the following 95-residue polypeptide: Co-chaperonin GroES (95 aa).

It belongs to the GroES chaperonin family. In terms of assembly, heptamer of 7 subunits arranged in a ring. Interacts with the chaperonin GroEL.

It localises to the cytoplasm. Functionally, together with the chaperonin GroEL, plays an essential role in assisting protein folding. The GroEL-GroES system forms a nano-cage that allows encapsulation of the non-native substrate proteins and provides a physical environment optimized to promote and accelerate protein folding. GroES binds to the apical surface of the GroEL ring, thereby capping the opening of the GroEL channel. This chain is Co-chaperonin GroES, found in Streptococcus salivarius.